The following is a 53-amino-acid chain: UPF0391 membrane protein Meso_3392 (53 aa).

A run of 2 helical transmembrane segments spans residues 4 to 24 and 33 to 53; these read WILILLIVAAVAGLLGMHSLA and ILIAIVLILFLLAVLGIIAIA.

This sequence belongs to the UPF0391 family.

It is found in the cell membrane. The polypeptide is UPF0391 membrane protein Meso_3392 (Chelativorans sp. (strain BNC1)).